Reading from the N-terminus, the 375-residue chain is Vasculin (375 aa).

2 disordered regions span residues 49-109 (SSDA…TSEI) and 356-375 (DSVQ…SDDE). Polar residues predominate over residues 96-108 (MKSQLHSENNTSE). The segment covering 365–375 (TSSSSDTSDDE) has biased composition (low complexity).

The protein belongs to the vasculin family.

It is found in the nucleus. Functions as a GC-rich promoter-specific transactivating transcription factor. The chain is Vasculin (gpbp1) from Xenopus tropicalis (Western clawed frog).